The following is a 900-amino-acid chain: Bifunctional uridylyltransferase/uridylyl-removing enzyme (900 aa).

Positions Met1–Pro342 are uridylyltransferase. Residues Leu343–Ser705 are uridylyl-removing. Positions Val461 to Leu583 constitute an HD domain. 2 ACT domains span residues Gln706–Arg789 and Val816–Arg891.

The protein belongs to the GlnD family. The cofactor is Mg(2+).

It catalyses the reaction [protein-PII]-L-tyrosine + UTP = [protein-PII]-uridylyl-L-tyrosine + diphosphate. It carries out the reaction [protein-PII]-uridylyl-L-tyrosine + H2O = [protein-PII]-L-tyrosine + UMP + H(+). Uridylyltransferase (UTase) activity is inhibited by glutamine, while glutamine activates uridylyl-removing (UR) activity. Its function is as follows. Modifies, by uridylylation and deuridylylation, the PII regulatory proteins (GlnB and homologs), in response to the nitrogen status of the cell that GlnD senses through the glutamine level. Under low glutamine levels, catalyzes the conversion of the PII proteins and UTP to PII-UMP and PPi, while under higher glutamine levels, GlnD hydrolyzes PII-UMP to PII and UMP (deuridylylation). Thus, controls uridylylation state and activity of the PII proteins, and plays an important role in the regulation of nitrogen assimilation and metabolism. This Pseudomonas aeruginosa (strain LESB58) protein is Bifunctional uridylyltransferase/uridylyl-removing enzyme.